The chain runs to 341 residues: Protein-glutamate methylesterase/protein-glutamine glutaminase 2 (341 aa).

Positions 11–126 (RVLVADDSEL…DLGEYGRLIR (116 aa)) constitute a Response regulatory domain. Residue Asp62 is modified to 4-aspartylphosphate. The CheB-type methylesterase domain maps to 152–341 (PARAARVEVV…IPRALRELTR (190 aa)). Residues Ser166, His193, and Asp285 contribute to the active site.

It belongs to the CheB family. Post-translationally, phosphorylated by CheA. Phosphorylation of the N-terminal regulatory domain activates the methylesterase activity.

It localises to the cytoplasm. The enzyme catalyses [protein]-L-glutamate 5-O-methyl ester + H2O = L-glutamyl-[protein] + methanol + H(+). It carries out the reaction L-glutaminyl-[protein] + H2O = L-glutamyl-[protein] + NH4(+). Involved in chemotaxis. Part of a chemotaxis signal transduction system that modulates chemotaxis in response to various stimuli. Catalyzes the demethylation of specific methylglutamate residues introduced into the chemoreceptors (methyl-accepting chemotaxis proteins or MCP) by CheR. Also mediates the irreversible deamidation of specific glutamine residues to glutamic acid. This Anaeromyxobacter dehalogenans (strain 2CP-C) protein is Protein-glutamate methylesterase/protein-glutamine glutaminase 2.